The chain runs to 137 residues: Large ribosomal subunit protein bL12 (137 aa).

The protein belongs to the bacterial ribosomal protein bL12 family. As to quaternary structure, homodimer. Part of the ribosomal stalk of the 50S ribosomal subunit. Forms a multimeric L10(L12)X complex, where L10 forms an elongated spine to which 2 to 4 L12 dimers bind in a sequential fashion. Binds GTP-bound translation factors.

Functionally, forms part of the ribosomal stalk which helps the ribosome interact with GTP-bound translation factors. Is thus essential for accurate translation. The chain is Large ribosomal subunit protein bL12 from Synechococcus sp. (strain JA-3-3Ab) (Cyanobacteria bacterium Yellowstone A-Prime).